The sequence spans 987 residues: Collagen alpha-1(I) chain (987 aa).

The span at 1 to 21 shows a compositional bias: pro residues; the sequence is SVPGPMGPSGPRGLPGPPGPG. A disordered region spans residues 1-987; sequence SVPGPMGPSG…PGPPGPPGPP (987 aa). P15, P18, P20, P29, P32, P35, P50, P65, P71, P80, and P86 each carry 4-hydroxyproline. Low complexity predominate over residues 23–41; that stretch reads QGFQGPPGEPGEPGSSGPM. Positions 53 to 67 are enriched in basic and acidic residues; that stretch reads NGDDGEAGKPGRPGE. Position 89 is a 5-hydroxylysine; alternate (K89). O-linked (Gal...) hydroxylysine; alternate glycosylation is present at K89. S95 bears the Phosphoserine mark. The segment covering 103–119 has biased composition (low complexity); sequence DAGPAGPKGEPGSPGEN. Residues P113, P116, P122, P131, P137, P158, P167, P170, P197, P200, P212, P218, P227, P233, P236, and P251 each carry the 4-hydroxyproline modification. Over residues 137–155 the composition is skewed to low complexity; that stretch reads PGASGPAGARGNDGAAGAA. Residues 157-169 show a composition bias toward pro residues; that stretch reads PPGPTGPAGPPGF. Residues 203-253 are compositionally biased toward low complexity; sequence AGAAGPAGNPGADGQPGAKGANGAPGIAGAPGFPGARGPSGPQGPSGAPGP. Position 254 is a 5-hydroxylysine (K254). 4-hydroxyproline is present on residues P260, P263, P275, P284, P299, P305, P314, and P320. A compositionally biased stretch (gly residues) spans 309 to 318; sequence GERGGPGSRG. K329 is modified (5-hydroxylysine). 4-hydroxyproline occurs at positions 338, 347, 353, 359, 368, 371, 380, 389, 395, 407, 416, 425, 428, 446, 468, 474, 480, 486, 492, 504, 513, 526, 532, and 541. Low complexity predominate over residues 362 to 388; that stretch reads KGLTGSPGSPGPDGKTGPPGPAGQDGR. A compositionally biased stretch (low complexity) spans 397-416; it reads ARGQAGVMGFPGPKGAAGEP. Positions 458-483 are enriched in low complexity; it reads QGPAPGFQGLPGPAGPPGEAGKPGEQ. K553 carries the post-translational modification 5-hydroxylysine. P559, P574, and P580 each carry 4-hydroxyproline. A compositionally biased stretch (low complexity) spans 586–600; it reads SGPSGPAGPTGARGA. S589 carries the phosphoserine modification. 4-hydroxyproline is present on residues P601, P607, P610, P619, P625, P643, P652, and P661. The segment covering 613–640 has biased composition (low complexity); it reads AGFAGPPGADGQPGAKGEPGDAGAKGDA. A compositionally biased stretch (pro residues) spans 642–654; it reads PPGPAGPTGPPGP. Position 664 is a 5-hydroxylysine (K664). Residues 669 to 685 are compositionally biased toward low complexity; it reads SAGPPGATGFPGAAGRV. 2 positions are modified to 4-hydroxyproline: P673 and P679. Residue P687 is modified to 3-hydroxyproline. 4-hydroxyproline occurs at positions 688, 697, 700, 721, 730, 738, 747, 765, 774, 777, 783, 798, 804, 810, 819, and 825. The span at 714–723 shows a compositional bias: low complexity; it reads ETGPAGRPGE. The span at 735–747 shows a compositional bias: low complexity; sequence KGSPGADGPAGAP. Residues 797-807 are compositionally biased toward pro residues; it reads PPGPMGPPGLA. Residues 809–824 show a composition bias toward low complexity; sequence PPGESGREGSPGAEGS. K834 bears the 5-hydroxylysine mark. The span at 843–858 shows a compositional bias: pro residues; sequence AGPPGAPGAPGAPGPV. A 4-hydroxyproline mark is found at P846, P849, and P852. The span at 879–893 shows a compositional bias: low complexity; sequence AGPAGARGPAGPQGP. Over residues 894–905 the composition is skewed to basic and acidic residues; that stretch reads RGDKGETGEQGD. Residue K897 is modified to 5-hydroxylysine. Residues P918, P921, P939, and P954 each carry the 4-hydroxyproline modification. Positions 921 to 954 are enriched in low complexity; the sequence is PGEQGPSGASGPAGPRGPPGSAGSPGKDGLNGLP. At P959 the chain carries 3-hydroxyproline. P960 carries the 4-hydroxyproline modification. The segment covering 972-987 has biased composition (pro residues); the sequence is VGPPGPPGPPGPPGPP. A 3-hydroxyproline modification is found at P974. 4-hydroxyproline is present on P975. Position 977 is a 3-hydroxyproline (P977). P978 bears the 4-hydroxyproline mark. Residue P980 is modified to 3-hydroxyproline. P981, P984, and P987 each carry 4-hydroxyproline.

The protein belongs to the fibrillar collagen family. In terms of assembly, trimers of one alpha 2(I) and two alpha 1(I) chains. In terms of processing, contains mostly 4-hydroxyproline. Proline residues at the third position of the tripeptide repeating unit (G-X-Y) are hydroxylated in some or all of the chains. Contains 3-hydroxyproline at a few sites. This modification occurs on the first proline residue in the sequence motif Gly-Pro-Hyp, where Hyp is 4-hydroxyproline. Post-translationally, lysine residues at the third position of the tripeptide repeating unit (G-X-Y) are 5-hydroxylated in some or all of the chains. In terms of processing, O-glycosylated on hydroxylated lysine residues. The O-linked glycan consists of a Glc-Gal disaccharide. As to expression, expressed in bones.

Its subcellular location is the secreted. It is found in the extracellular space. It localises to the extracellular matrix. Type I collagen is a member of group I collagen (fibrillar forming collagen). The protein is Collagen alpha-1(I) chain of Glossotherium robustum (Ground sloth).